A 431-amino-acid polypeptide reads, in one-letter code: Beclin-2 (431 aa).

Residues 17-74 (LSGSSESRSLPAAPAPTSGQAEPGDTREPGVTTREVTDAEEQQDGASSRSPPGDGSVS) form a disordered region. Positions 125 to 248 (LLEQLDIQLA…ARVQRDRLKE (124 aa)) form a coiled coil. The interval 173–243 (EARLVQELED…NQLQYARVQR (71 aa)) is required for homodimer formation.

Belongs to the beclin family. Homodimer (via coiled-coil domain). Interacts (via coiled-coil domain) with ATG14 (via coiled-coil domain); this interaction is tighter than BECN2 self-association. Interacts with AMBRA1, UVRAG and PIK3C3/VPS34; these interactions are not disrupted by starvation. Does not interact with RUBCN. Interacts (via N-terminus) with GPRASP1/GASP1; the interaction is direct. As to expression, present in fetal and adult brain (at protein level).

It is found in the cytoplasm. In terms of biological role, involved in 2 distinct lysosomal degradation pathways: acts as a regulator of autophagy and as a regulator of G-protein coupled receptors turnover. Regulates degradation in lysosomes of a variety of G-protein coupled receptors via its interaction with GPRASP1/GASP1. The sequence is that of Beclin-2 from Homo sapiens (Human).